The following is a 379-amino-acid chain: Pre-mRNA-processing protein 45 (379 aa).

The segment covering 1–10 has biased composition (pro residues); that stretch reads MFSNRLPPPK. 2 disordered regions span residues 1 to 22 and 353 to 379; these read MFSN…ALSS and SEGA…NYGA. Positions 368–379 are enriched in basic and acidic residues; it reads AESDDKSDNYGA.

It belongs to the SNW family. As to quaternary structure, belongs to the CWC complex (or CEF1-associated complex), a spliceosome sub-complex reminiscent of a late-stage spliceosome composed of the U2, U5 and U6 snRNAs and at least BUD13, BUD31, BRR2, CDC40, CEF1, CLF1, CUS1, CWC2, CWC15, CWC21, CWC22, CWC23, CWC24, CWC25, CWC27, ECM2, HSH155, IST3, ISY1, LEA1, MSL1, NTC20, PRP8, PRP9, PRP11, PRP19, PRP21, PRP22, PRP45, PRP46, SLU7, SMB1, SMD1, SMD2, SMD3, SMX2, SMX3, SNT309, SNU114, SPP2, SYF1, SYF2, RSE1 and YJU2. Interacts with CLF1, PRP22 and PRP46. Interacts with SPP382.

It localises to the nucleus. Functionally, involved in pre-mRNA splicing. Associated with the spliceosome throughout the splicing reactions, until after the second catalytic step. The protein is Pre-mRNA-processing protein 45 (PRP45) of Saccharomyces cerevisiae (strain ATCC 204508 / S288c) (Baker's yeast).